The chain runs to 419 residues: CinA-like protein (419 aa).

Belongs to the CinA family.

The protein is CinA-like protein of Acaryochloris marina (strain MBIC 11017).